Consider the following 164-residue polypeptide: Interleukin-10 (164 aa).

Residues Met1 to Ala18 form the signal peptide. Intrachain disulfides connect Cys30-Cys126 and Cys80-Cys132. An N-linked (GlcNAc...) asparagine glycan is attached at Asn134.

The protein belongs to the IL-10 family. Homodimer. Interacts with IL10RA and IL10RB.

Its subcellular location is the secreted. Functionally, major immune regulatory cytokine that acts on many cells of the immune system where it has profound anti-inflammatory functions, limiting excessive tissue disruption caused by inflammation. Mechanistically, IL10 binds to its heterotetrameric receptor comprising IL10RA and IL10RB leading to JAK1 and STAT2-mediated phosphorylation of STAT3. In turn, STAT3 translocates to the nucleus where it drives expression of anti-inflammatory mediators. Targets antigen-presenting cells (APCs) such as macrophages and monocytes and inhibits their release of pro-inflammatory cytokines including granulocyte-macrophage colony-stimulating factor /GM-CSF, granulocyte colony-stimulating factor/G-CSF, IL-1 alpha, IL-1 beta, IL-6, IL-8 and TNF-alpha. Also interferes with antigen presentation by reducing the expression of MHC-class II and co-stimulatory molecules, thereby inhibiting their ability to induce T cell activation. In addition, controls the inflammatory response of macrophages by reprogramming essential metabolic pathways including mTOR signaling. The polypeptide is Interleukin-10 (IL10) (Orcinus orca (Killer whale)).